A 568-amino-acid chain; its full sequence is Polyprotein P2A (568 aa).

2 helical membrane passes run 10–30 (KSVM…ISVA) and 41–61 (TLIC…CAVC). A Peptidase S39 domain is found at 129-326 (VENSRLQPLE…TVENSELYPD (198 aa)). Residues His176, Asp209, and Ser276 each act as for protease activity in the active site. A Phosphothreonine; by host modification is found at Thr339. Ser390 is subject to Phosphoserine; by host. Disordered regions lie at residues 403 to 435 (LNYQ…ESSI) and 469 to 568 (SSQN…ATSK). Polar residues-rich tracts occupy residues 419–435 (NLSS…ESSI) and 469–478 (SSQNSKSSLG). A compositionally biased stretch (basic and acidic residues) spans 481-502 (ADRKQKSDRSSSKPEGLKESKR). A compositionally biased stretch (polar residues) spans 507–516 (NWQSLTSKPS). A compositionally biased stretch (basic residues) spans 539 to 549 (KSKRSRTRGKS). Over residues 554-568 (VPASPSPKSGSATSK) the composition is skewed to polar residues.

It localises to the host membrane. Functionally, responsible for cleavages of polyprotein P2A and replicase polyprotein P2AB. Its function is as follows. Covalently attached to the 5' extremity of the genomic and subgenomic RNAs. It may serve as a primer for the replicase. The protein is Polyprotein P2A of Cocksfoot mottle virus (isolate Dactylis glomerata/Norway/CfMV-NO/1995) (CfMV).